We begin with the raw amino-acid sequence, 178 residues long: MLSFFKTLSMGRSGWLLLAFSALVLELVALYFQYGMQLQPCVMCVYERVALGGILFAGIIGAIAPSSWFFRFLGIIIGLGASVKGFLLALKHVDYQLNPAPWNQCAYLPEFPQTLPLDQWFPYLFKPIGSCSDIQWSFLGFSMAQWILVMFAFYSILLAIILISQVKAGKPKHREIFR.

Over 1–14 (MLSFFKTLSMGRSG) the chain is Cytoplasmic. A helical membrane pass occupies residues 15–31 (WLLLAFSALVLELVALY). Residues 32 to 49 (FQYGMQLQPCVMCVYERV) lie on the Periplasmic side of the membrane. An intrachain disulfide couples Cys41 to Cys44. Residues 50–65 (ALGGILFAGIIGAIAP) form a helical membrane-spanning segment. At 66 to 72 (SSWFFRF) the chain is on the cytoplasmic side. Residues 73–90 (LGIIIGLGASVKGFLLAL) form a helical membrane-spanning segment. The Periplasmic portion of the chain corresponds to 91 to 145 (KHVDYQLNPAPWNQCAYLPEFPQTLPLDQWFPYLFKPIGSCSDIQWSFLGFSMAQ). A disulfide bridge connects residues Cys105 and Cys131. The helical transmembrane segment at 146-164 (WILVMFAFYSILLAIILIS) threads the bilayer. The Cytoplasmic segment spans residues 165–178 (QVKAGKPKHREIFR).

The protein belongs to the DsbB family.

The protein localises to the cell inner membrane. In terms of biological role, required for disulfide bond formation in some periplasmic proteins. Acts by oxidizing the DsbA protein. The sequence is that of Disulfide bond formation protein B from Mannheimia succiniciproducens (strain KCTC 0769BP / MBEL55E).